A 372-amino-acid polypeptide reads, in one-letter code: L-selectin (372 aa).

Positions Met1–Cys28 are cleaved as a signal peptide. A propeptide spanning residues Asp29–Cys38 is cleaved from the precursor. Residues Trp39–Asn332 are Extracellular-facing. The C-type lectin domain occupies Arg55–Cys155. Cystine bridges form between Cys57–Cys155, Cys128–Cys147, Cys128–Cys160, Cys160–Cys171, Cys165–Cys180, Cys182–Cys191, Cys197–Cys241, Cys227–Cys254, Cys259–Cys303, and Cys289–Cys316. N-linked (GlcNAc...) asparagine glycans are attached at residues Asn60 and Asn104. Ca(2+) contacts are provided by Glu118, Asn120, Glu126, Asn143, and Asp144. The EGF-like domain maps to Tyr156 to Gln192. The N-linked (GlcNAc...) asparagine glycan is linked to Asn177. 2 Sushi domains span residues Ile195–Val256 and Ile257–Lys318. Asn226, Asn232, Asn246, and Asn271 each carry an N-linked (GlcNAc...) asparagine glycan. The helical transmembrane segment at Pro333–Ala355 threads the bilayer. Residues Arg356 to Tyr372 are Cytoplasmic-facing.

This sequence belongs to the selectin/LECAM family. As to quaternary structure, interaction with SELPLG/PSGL1 and PODXL2 is required for promoting recruitment and rolling of leukocytes. This interaction is dependent on the sialyl Lewis X glycan modification of SELPLG and PODXL2, and tyrosine sulfation modifications of SELPLG. Sulfation on 'Tyr-51' of SELPLG is important for L-selectin binding. In terms of processing, N-glycosylated.

The protein localises to the cell membrane. In terms of biological role, calcium-dependent lectin that mediates cell adhesion by binding to glycoproteins on neighboring cells. Mediates the adherence of lymphocytes to endothelial cells of high endothelial venules in peripheral lymph nodes. Promotes initial tethering and rolling of leukocytes in endothelia. The polypeptide is L-selectin (SELL) (Macaca mulatta (Rhesus macaque)).